Here is a 245-residue protein sequence, read N- to C-terminus: Protein canopy homolog 4 (245 aa).

Residues 1–27 (MCGLRFIMGPVRLEILLFILAAYGAWA) form the signal peptide. Intrachain disulfides connect Cys-44-Cys-202, Cys-47-Cys-190, and Cys-100-Cys-162. The segment at 207 to 245 (WTGKEKISDGQEEADDEEEEEEEEITKTSGNPKHDPEDL) is disordered. A coiled-coil region spans residues 209–237 (GKEKISDGQEEADDEEEEEEEEITKTSGN). Acidic residues predominate over residues 216–230 (GQEEADDEEEEEEEE).

Belongs to the canopy family. In terms of assembly, interacts with TLR4. Highly expressed in lung, spleen, thymus, and uterus. Moderately expressed in kidney, stomach and placenta. Weakly expressed in brain, heart, liver, small intestine, skeletal muscle and testis.

The protein resides in the secreted. Its function is as follows. Plays a role in the regulation of the cell surface expression of TLR4. The sequence is that of Protein canopy homolog 4 (Cnpy4) from Mus musculus (Mouse).